The sequence spans 190 residues: Protein A52 (190 aa).

The protein belongs to the orthopoxvirus A52R protein family. As to quaternary structure, interacts with host TRAF6 and IRAK2.

Its function is as follows. Bcl-2-like protein which targets host toll-like receptor signaling complexes to suppress innate immune response. Interacts with host TRAF6 to activate p38 and subsequently induce the expression of several cytokines such as IL-10. Also associates with host IRAK2 to inhibit NF-kappa-B signaling. This is Protein A52 from Homo sapiens (Human).